We begin with the raw amino-acid sequence, 95 residues long: Small ribosomal subunit protein bS6 (95 aa).

The protein belongs to the bacterial ribosomal protein bS6 family.

Its function is as follows. Binds together with bS18 to 16S ribosomal RNA. In Clostridium perfringens (strain ATCC 13124 / DSM 756 / JCM 1290 / NCIMB 6125 / NCTC 8237 / Type A), this protein is Small ribosomal subunit protein bS6.